We begin with the raw amino-acid sequence, 188 residues long: MTSISNVSKGSIIRFKGEPHIIESLVHRTPGNLRAFYQANMKNLKTGRNVEYRFSASESVDLIVTERKQYQYLYRDGNDYVMMDNDTFDQINVQELSIGPSARFLKDGINVTIIFSDDGSILDVELPTFVEVEVMETSPATKDDRATSGTKPATVETGAEVSVPMFIQCGSVIRVDTRTGEYIERVKK.

It belongs to the elongation factor P family.

The protein localises to the cytoplasm. It functions in the pathway protein biosynthesis; polypeptide chain elongation. Involved in peptide bond synthesis. Stimulates efficient translation and peptide-bond synthesis on native or reconstituted 70S ribosomes in vitro. Probably functions indirectly by altering the affinity of the ribosome for aminoacyl-tRNA, thus increasing their reactivity as acceptors for peptidyl transferase. The chain is Elongation factor P from Chlorobium limicola (strain DSM 245 / NBRC 103803 / 6330).